The chain runs to 174 residues: Large ribosomal subunit protein uL10 (174 aa).

The protein belongs to the universal ribosomal protein uL10 family. Part of the ribosomal stalk of the 50S ribosomal subunit. The N-terminus interacts with L11 and the large rRNA to form the base of the stalk. The C-terminus forms an elongated spine to which L12 dimers bind in a sequential fashion forming a multimeric L10(L12)X complex.

Its function is as follows. Forms part of the ribosomal stalk, playing a central role in the interaction of the ribosome with GTP-bound translation factors. The chain is Large ribosomal subunit protein uL10 from Trichlorobacter lovleyi (strain ATCC BAA-1151 / DSM 17278 / SZ) (Geobacter lovleyi).